Reading from the N-terminus, the 189-residue chain is Chitin synthase 2 (189 aa).

The protein belongs to the chitin synthase family. Class II subfamily.

It is found in the cell membrane. The catalysed reaction is [(1-&gt;4)-N-acetyl-beta-D-glucosaminyl](n) + UDP-N-acetyl-alpha-D-glucosamine = [(1-&gt;4)-N-acetyl-beta-D-glucosaminyl](n+1) + UDP + H(+). Polymerizes chitin, a structural polymer of the cell wall and septum, by transferring the sugar moiety of UDP-GlcNAc to the non-reducing end of the growing chitin polymer. The polypeptide is Chitin synthase 2 (chs2) (Aspergillus niger).